Here is a 288-residue protein sequence, read N- to C-terminus: Diaminopimelate epimerase (288 aa).

Substrate contacts are provided by asparagine 14 and asparagine 67. Catalysis depends on cysteine 76, which acts as the Proton donor. Residues 77–78 (GN), asparagine 166, asparagine 199, and 217–218 (ER) each bind substrate. Cysteine 226 acts as the Proton acceptor in catalysis. 227–228 (GT) is a substrate binding site.

It belongs to the diaminopimelate epimerase family. Homodimer.

Its subcellular location is the cytoplasm. It carries out the reaction (2S,6S)-2,6-diaminopimelate = meso-2,6-diaminopimelate. Its pathway is amino-acid biosynthesis; L-lysine biosynthesis via DAP pathway; DL-2,6-diaminopimelate from LL-2,6-diaminopimelate: step 1/1. In terms of biological role, catalyzes the stereoinversion of LL-2,6-diaminopimelate (L,L-DAP) to meso-diaminopimelate (meso-DAP), a precursor of L-lysine and an essential component of the bacterial peptidoglycan. This Bacillus cereus (strain B4264) protein is Diaminopimelate epimerase.